A 155-amino-acid chain; its full sequence is Photosystem I reaction center subunit XI (155 aa).

2 helical membrane-spanning segments follow: residues 80–102 (LISG…LVSF) and 117–139 (GWSQ…AFFL).

The protein belongs to the PsaL family.

Its subcellular location is the cellular thylakoid membrane. The protein is Photosystem I reaction center subunit XI of Thermosynechococcus vestitus (strain NIES-2133 / IAM M-273 / BP-1).